The chain runs to 288 residues: MKNSPIGVFDSGVGGLTVARTIVDQAPTESIMYVGDTAHAPYGPKPREDIIRYSTAIADDLVARGAKMIVIACNTAASVFLDKARELYDVPVVGVIEPASRRAVAATRNGRVGVIGTTGTIASGAYQRCIANLDPNIEVHAVDCPQFVPFVERGITTGRQIMGLAEAYLEPLQDVGVDTVVLGCTHYPLLTGVIQLVMGDNVTLVSSSEEEGKEVPRVLYQEDLFNDANPEAESLDVVDANVVNDYAGPEPVRTFESTGDPHRFARLARRFLGPSITQVSHVEGLTDM.

Residues Asp-10–Ser-11 and Tyr-42–Gly-43 contribute to the substrate site. Catalysis depends on Cys-73, which acts as the Proton donor/acceptor. Asn-74–Thr-75 is a substrate binding site. Cys-184 functions as the Proton donor/acceptor in the catalytic mechanism. Thr-185–His-186 is a substrate binding site.

This sequence belongs to the aspartate/glutamate racemases family.

It catalyses the reaction L-glutamate = D-glutamate. It functions in the pathway cell wall biogenesis; peptidoglycan biosynthesis. In terms of biological role, provides the (R)-glutamate required for cell wall biosynthesis. The chain is Glutamate racemase from Corynebacterium kroppenstedtii (strain DSM 44385 / JCM 11950 / CIP 105744 / CCUG 35717).